Reading from the N-terminus, the 404-residue chain is Phosphopentomutase (404 aa).

6 residues coordinate Mn(2+): D10, D303, H308, D344, H345, and H356.

Belongs to the phosphopentomutase family. It depends on Mn(2+) as a cofactor.

It is found in the cytoplasm. The catalysed reaction is 2-deoxy-alpha-D-ribose 1-phosphate = 2-deoxy-D-ribose 5-phosphate. The enzyme catalyses alpha-D-ribose 1-phosphate = D-ribose 5-phosphate. It participates in carbohydrate degradation; 2-deoxy-D-ribose 1-phosphate degradation; D-glyceraldehyde 3-phosphate and acetaldehyde from 2-deoxy-alpha-D-ribose 1-phosphate: step 1/2. In terms of biological role, isomerase that catalyzes the conversion of deoxy-ribose 1-phosphate (dRib-1-P) and ribose 1-phosphate (Rib-1-P) to deoxy-ribose 5-phosphate (dRib-5-P) and ribose 5-phosphate (Rib-5-P), respectively. The sequence is that of Phosphopentomutase from Shewanella sp. (strain MR-7).